The sequence spans 302 residues: uncharacterized protein (302 aa).

This is an uncharacterized protein from Ictaluridae (bullhead catfishes).